A 428-amino-acid polypeptide reads, in one-letter code: Enolase (428 aa).

Glutamine 167 is a (2R)-2-phosphoglycerate binding site. Glutamate 209 functions as the Proton donor in the catalytic mechanism. The Mg(2+) site is built by aspartate 246, glutamate 289, and aspartate 316. (2R)-2-phosphoglycerate is bound by residues lysine 341, arginine 370, serine 371, and lysine 392. Lysine 341 (proton acceptor) is an active-site residue.

This sequence belongs to the enolase family. As to quaternary structure, component of the RNA degradosome, a multiprotein complex involved in RNA processing and mRNA degradation. Mg(2+) is required as a cofactor.

It is found in the cytoplasm. The protein localises to the secreted. The protein resides in the cell surface. The catalysed reaction is (2R)-2-phosphoglycerate = phosphoenolpyruvate + H2O. It participates in carbohydrate degradation; glycolysis; pyruvate from D-glyceraldehyde 3-phosphate: step 4/5. Functionally, catalyzes the reversible conversion of 2-phosphoglycerate (2-PG) into phosphoenolpyruvate (PEP). It is essential for the degradation of carbohydrates via glycolysis. The chain is Enolase from Saccharophagus degradans (strain 2-40 / ATCC 43961 / DSM 17024).